Consider the following 484-residue polypeptide: Poly(A) polymerase alpha-B (484 aa).

The Nuclear localization signal 1 motif lies at 240–257 (RKQLHQLLPSHVLPKKKK). Disordered regions lie at residues 276–314 (SVDSDNSMSVPSPTNATRTSPLNSTGLSQGNSPATPVSL), 326–356 (VPQNNSTENSGGSLNESIPETATHPAFSSTP), and 375–484 (KPVT…RLNR). The short motif at 392-407 (KRTSSPTNEESPKKTK) is the Nuclear localization signal 2 element. The segment covering 423–441 (EQNKLEPEELKEVHSEEKS) has biased composition (basic and acidic residues). The span at 451 to 464 (SSQRSSSTDLSDIS) shows a compositional bias: low complexity.

Belongs to the poly(A) polymerase family. In terms of assembly, monomer.

The protein localises to the nucleus. The catalysed reaction is RNA(n) + ATP = RNA(n)-3'-adenine ribonucleotide + diphosphate. Functionally, polymerase that creates the 3'-poly(A) tail of mRNA's. May acquire specificity through interaction with a cleavage and polyadenylation factor (CPSF). In Xenopus laevis (African clawed frog), this protein is Poly(A) polymerase alpha-B (papola-b).